The chain runs to 50 residues: uncharacterized protein (50 aa).

Positions 28–50 are disordered; the sequence is SKLSPVTNGGKTIGKSNKVSKND. The span at 29-50 shows a compositional bias: polar residues; it reads KLSPVTNGGKTIGKSNKVSKND.

This is an uncharacterized protein from Haemophilus influenzae (strain ATCC 51907 / DSM 11121 / KW20 / Rd).